Consider the following 166-residue polypeptide: Succinate dehydrogenase [ubiquinone] cytochrome b small subunit, mitochondrial (166 aa).

Residues 1 to 65 lie on the Mitochondrial matrix side of the membrane; the sequence is MASVARSSAL…VPPPSPSHGS (65 aa). Residues 66 to 87 form a helical membrane-spanning segment; it reads YHWTFDRVVAAGLIPLTVAPFA. Residues 88–94 lie on the Mitochondrial intermembrane side of the membrane; it reads AGSLNPT. The helical transmembrane segment at 95–115 threads the bilayer; sequence MDAVLAATILIHSHTGFGNII. Residue His106 coordinates heme. At 116 to 124 the chain is on the mitochondrial matrix side; that stretch reads VDYVPSKRV. A ubiquinone is bound at residue Tyr118. The chain crosses the membrane as a helical span at residues 125-149; sequence PKARKVFTWGLNAATVLVGLALYEF. The Mitochondrial intermembrane portion of the chain corresponds to 150-166; sequence ETTDVGLTETIKRVWKA.

This sequence belongs to the CybS family. Forms part of complex II containing four subunits: a flavoprotein (FP), an iron-sulfur protein (IP) and a cytochrome b composed of a large and a small subunit.

Its subcellular location is the mitochondrion inner membrane. Its pathway is carbohydrate metabolism; tricarboxylic acid cycle. In terms of biological role, membrane-anchoring subunit of succinate dehydrogenase (SDH) that is involved in complex II of the mitochondrial electron transport chain and is responsible for transferring electrons from succinate to ubiquinone (coenzyme Q). This Neurospora crassa (strain ATCC 24698 / 74-OR23-1A / CBS 708.71 / DSM 1257 / FGSC 987) protein is Succinate dehydrogenase [ubiquinone] cytochrome b small subunit, mitochondrial.